The sequence spans 347 residues: Tetracycline resistance determinant (347 aa).

The next 8 helical transmembrane spans lie at 3–20, 30–52, 73–95, 108–130, 137–156, 161–183, 204–226, and 294–316; these read VLGA…LIVA, SPAA…PVEL, CSAV…PLFL, LVVI…LIAS, LAIV…ATTG, MWGI…TVIT, CAGQ…AVAL, and GFHI…TWFL. The disordered stretch occupies residues 321-347; the sequence is EETAPEEERPAESGAGAKNGPLPASDA.

This sequence belongs to the major facilitator superfamily. TCR/Tet family.

It is found in the cell membrane. Resistance to tetracycline by an active tetracycline efflux. This is an energy-dependent process that decreases the accumulation of the antibiotic in whole cells. This protein functions as a metal-tetracycline/H(+) antiporter. In Streptomyces rimosus, this protein is Tetracycline resistance determinant (tetB).